Reading from the N-terminus, the 1025-residue chain is Multidrug resistance protein MdtC (1025 aa).

The next 12 helical transmembrane spans lie at 16–36, 333–353, 360–380, 387–407, 431–451, 459–479, 528–548, 853–873, 875–895, 897–917, 953–973, and 984–1004; these read LLTLAIALAGILGFRLLPVAP, EVEQSLMIAVALVILVVFVFL, LIPAVAVPVSLIGTFAAMYLC, LSLMALTIATGFVVDDAIVVL, VGFTVLSMSLSLIAVFLPLLM, FFAEFSITLSVAILISLFVSV, WVLLLLLGTVALTVWLFISIP, LWLMLAAIAAVYIVLGILYES, VHPLTILSTLPSAGVGALLAL, LFDTPFSLIALIGILLLIGIV, PILMTTLAALFGALPLVLTSG, and ITIAGGLIMSQLLTLYTTPVV.

It belongs to the resistance-nodulation-cell division (RND) (TC 2.A.6) family. MdtC subfamily. In terms of assembly, part of a tripartite efflux system composed of MdtA, MdtB and MdtC. MdtC forms a heteromultimer with MdtB.

The protein localises to the cell inner membrane. This is Multidrug resistance protein MdtC from Pantoea ananatis (strain AJ13355).